Reading from the N-terminus, the 259-residue chain is Flagellar L-ring protein (259 aa).

A signal peptide spans 1–15 (MKRISLIALVTIMSG). Cys-16 carries N-palmitoyl cysteine lipidation. Cys-16 carries the S-diacylglycerol cysteine lipid modification.

This sequence belongs to the FlgH family. As to quaternary structure, the basal body constitutes a major portion of the flagellar organelle and consists of four rings (L,P,S, and M) mounted on a central rod.

The protein localises to the cell outer membrane. It is found in the bacterial flagellum basal body. Assembles around the rod to form the L-ring and probably protects the motor/basal body from shearing forces during rotation. The polypeptide is Flagellar L-ring protein (Vibrio vulnificus (strain CMCP6)).